A 189-amino-acid chain; its full sequence is Lumazine protein (189 aa).

2 Lumazine-binding repeats span residues 1–96 (MFKG…LGKG) and 97–189 (ALTG…SNEW).

6,7-dimethyl-8-(1-D-ribityl)lumazine serves as cofactor.

Its function is as follows. Antenna protein that modulates the color of the bioluminescence emission of the luciferase. In the presence of LumP, luciferase emission is shifted to higher energy values (shorter wavelength). The sequence is that of Lumazine protein (luxL) from Photobacterium phosphoreum.